We begin with the raw amino-acid sequence, 1612 residues long: DNA (cytosine-5)-methyltransferase PliMCI (1612 aa).

The 95-residue stretch at 7–101 folds into the DMAP1-binding domain; that stretch reads CDQVIPPNVR…NGDTKEEASS (95 aa). The interval 87 to 338 is disordered; that stretch reads TCSPVNGDTK…TAESKQPPLR (252 aa). Positions 94 to 110 are enriched in basic and acidic residues; that stretch reads DTKEEASSNGKDDEKAE. Low complexity predominate over residues 115–131; it reads NGTTSNGSTTNGSSGSS. Residues 132 to 142 show a composition bias toward polar residues; that stretch reads KANGHTNGGYV. Over residues 143–154 the composition is skewed to low complexity; that stretch reads QSSSQEETGTSQ. Basic and acidic residues-rich tracts occupy residues 193–212, 222–232, and 260–289; these read VLGD…KKDV, EESATPDEKTL, and KKEE…KKEE. A CXXC-type zinc finger spans residues 626-672; that stretch reads ASERKKRCGVCEICQAPDCGKCTACKDMIKFGGSGKAKQACKDRRCP. C633, C636, C639, C644, C647, C650, C666, and C671 together coordinate Zn(2+). The interval 677 to 708 is disordered; that stretch reads QEADENDIDEMDNSSNKENKDEKKAKKGRKLE. Positions 678–688 are enriched in acidic residues; it reads EADENDIDEMD. Residues 691–708 are compositionally biased toward basic and acidic residues; the sequence is SNKENKDEKKAKKGRKLE. 2 BAH domains span residues 743-871 and 967-1089; these read EKIE…EDYE and NYRK…EDPP. Residues 1084–1121 form a disordered region; the sequence is CFEDPPSKSRSTRMKGKGKGKGKGKAKGKIAVEKEEEK. A compositionally biased stretch (basic residues) spans 1093–1111; the sequence is RSTRMKGKGKGKGKGKAKG. Residues 1131 to 1590 enclose the SAM-dependent MTase C5-type domain; that stretch reads LKCLDVFAGC…MEIKVCLQTK (460 aa). Residues 1142–1143, 1160–1161, 1182–1183, and C1183 contribute to the S-adenosyl-L-methionine site; these read GL, EK, and DC. Residue C1218 is part of the active site. N1569 and V1571 together coordinate S-adenosyl-L-methionine.

Belongs to the class I-like SAM-binding methyltransferase superfamily. C5-methyltransferase family.

It localises to the nucleus. It carries out the reaction a 2'-deoxycytidine in DNA + S-adenosyl-L-methionine = a 5-methyl-2'-deoxycytidine in DNA + S-adenosyl-L-homocysteine + H(+). Its function is as follows. Methylates CpG residues. The sequence is that of DNA (cytosine-5)-methyltransferase PliMCI (DNMT) from Paracentrotus lividus (Common sea urchin).